Here is a 163-residue protein sequence, read N- to C-terminus: Ribonuclease P protein subunit p25-like protein (163 aa).

2 disordered regions span residues 1 to 22 (MEHY…PQLP) and 129 to 163 (NEYG…DTRF). Basic residues predominate over residues 154 to 163 (PRRRARDTRF).

It belongs to the histone-like Alba family.

The protein resides in the nucleus. May be a component of ribonuclease P or MRP. This chain is Ribonuclease P protein subunit p25-like protein (RPP25L), found in Bos taurus (Bovine).